The chain runs to 260 residues: Outer membrane protein assembly factor BamD (260 aa).

An N-terminal signal peptide occupies residues 1-19 (MRKLKSFTFIALTAFAITA). Residue Cys20 is the site of N-palmitoyl cysteine attachment. A lipid anchor (S-diacylglycerol cysteine) is attached at Cys20.

The protein belongs to the BamD family. As to quaternary structure, part of the Bam complex.

The protein resides in the cell outer membrane. In terms of biological role, part of the outer membrane protein assembly complex, which is involved in assembly and insertion of beta-barrel proteins into the outer membrane. The sequence is that of Outer membrane protein assembly factor BamD from Pasteurella multocida (strain Pm70).